Consider the following 229-residue polypeptide: tRNA (guanine-N(7)-)-methyltransferase (229 aa).

Residues Glu-59, Glu-84, Asp-111, and Asp-134 each coordinate S-adenosyl-L-methionine. Residue Asp-134 is part of the active site. Substrate contacts are provided by residues Lys-138, Asp-170, and 205–208 (TKFE).

This sequence belongs to the class I-like SAM-binding methyltransferase superfamily. TrmB family.

The enzyme catalyses guanosine(46) in tRNA + S-adenosyl-L-methionine = N(7)-methylguanosine(46) in tRNA + S-adenosyl-L-homocysteine. Its pathway is tRNA modification; N(7)-methylguanine-tRNA biosynthesis. Functionally, catalyzes the formation of N(7)-methylguanine at position 46 (m7G46) in tRNA. The sequence is that of tRNA (guanine-N(7)-)-methyltransferase from Nitrosospira multiformis (strain ATCC 25196 / NCIMB 11849 / C 71).